The following is a 1288-amino-acid chain: (E3-independent) E2 ubiquitin-conjugating enzyme UBE2O (1288 aa).

Low complexity-rich tracts occupy residues Met-1–Ala-26 and Ala-34–Pro-47. 2 disordered regions span residues Met-1–Ser-51 and Glu-80–Ala-109. Phosphoserine is present on residues Ser-45, Ser-82, Ser-84, and Ser-394. Disordered stretches follow at residues Thr-396–Val-529 and Glu-711–Val-743. Positions Cys-401–Ala-418 are enriched in basic and acidic residues. Residue Ser-436 is modified to Phosphoserine. The span at Met-440 to Glu-450 shows a compositional bias: acidic residues. Residues Glu-462 to Glu-472 show a composition bias toward basic and acidic residues. Positions Gln-473 to Asp-485 are enriched in acidic residues. Phosphothreonine is present on residues Thr-483 and Thr-486. The span at Thr-486–Gly-502 shows a compositional bias: low complexity. Ser-510 carries the post-translational modification Phosphoserine. Basic residues predominate over residues Asn-517–Lys-528. Residues Val-717–Ser-726 show a composition bias toward low complexity. Residues Asp-727–Glu-737 show a composition bias toward acidic residues. The stretch at Arg-809–Val-879 forms a coiled coil. The residue at position 833 (Ser-833) is a Phosphoserine. Thr-835 bears the Phosphothreonine mark. Position 836 is a phosphoserine (Ser-836). Positions Glu-872–Glu-890 are enriched in basic and acidic residues. The segment at Glu-872 to Trp-899 is disordered. Ser-893 carries the post-translational modification Phosphoserine. The 161-residue stretch at Lys-950–Thr-1110 folds into the UBC core domain. The active-site Glycyl thioester intermediate is the Cys-1037. Positions Gly-1158–Tyr-1247 are disordered.

This sequence belongs to the ubiquitin-conjugating enzyme family. Interacts with CPNE1 (via VWFA domain) and CPNE4 (via VWFA domain). Interacts with UBR2. Post-translationally, phosphorylated. Phosphorylation affects subcellular location. In terms of processing, ubiquitinated: autoubiquitinates, possibly affecting its subcellular location. As to expression, highly expressed in reticulocytes.

Its subcellular location is the cytoplasm. The protein resides in the nucleus. The enzyme catalyses S-ubiquitinyl-[E1 ubiquitin-activating enzyme]-L-cysteine + [acceptor protein]-L-lysine = [E1 ubiquitin-activating enzyme]-L-cysteine + N(6)-monoubiquitinyl-[acceptor protein]-L-lysine.. It participates in protein modification; protein ubiquitination. Inhibited by inorganic arsenite such as phenylarsenoxides. Its function is as follows. E2/E3 hybrid ubiquitin-protein ligase that displays both E2 and E3 ligase activities and mediates monoubiquitination of target proteins. Negatively regulates TRAF6-mediated NF-kappa-B activation independently of its E2 activity. Acts as a positive regulator of BMP7 signaling by mediating monoubiquitination of SMAD6, thereby regulating adipogenesis. Mediates monoubiquitination at different sites of the nuclear localization signal (NLS) of BAP1, leading to cytoplasmic retention of BAP1. Also able to monoubiquitinate the NLS of other chromatin-associated proteins, such as INO80 and CXXC1, affecting their subcellular location. Acts as a regulator of retrograde transport by assisting the TRIM27:MAGEL2 E3 ubiquitin ligase complex to mediate 'Lys-63'-linked ubiquitination of WASHC1, leading to promote endosomal F-actin assembly. The sequence is that of (E3-independent) E2 ubiquitin-conjugating enzyme UBE2O (Ube2o) from Mus musculus (Mouse).